We begin with the raw amino-acid sequence, 352 residues long: MTEYKLALVGFGGVNRALAQLIAERNQQWKTELGFTLKIVGVTDLFLGSVMNRHGLDAASLARLPASKGAMAQLPGGTVDALNEAVIKDCGADIIAEATFTNPVDGEPATSFCRWALERGKHVVTTNKGPIALHGAELKALARCNNVAFEYEGSVMSGTPVIRLAKQALAGSSITGFEGILNGTSNFVLTAMEGGLGFAEAVSQAQALGYAEADPTADVEGHDVRLKVVILANELLDAKLTVNDVSCKGISALSLDDIEKARRDNARWKLIGAATRNADGSISASVEPRLLSNDHPLASISSATNAVSFTSELLGAVTVSGPGAGRTETAFALLSDIIHIHQSATRKQEHTL.

This sequence belongs to the homoserine dehydrogenase family.

It carries out the reaction L-homoserine + NAD(+) = L-aspartate 4-semialdehyde + NADH + H(+). Functionally, dehydrogenase involved in the degradation of canavanine, the delta-oxa-analog of arginine, allowing growth on canavanine as sole nitrogen and carbon source. Catalyzes the conversion of homoserine and NAD(+) to aspartate-semialdehyde and NADH. Is highly specific for NAD(+) and cannot use NADP(+). The protein is NAD(+)-dependent homoserine dehydrogenase of Pseudomonas canavaninivorans.